The sequence spans 456 residues: Riboflavin transporter RibZ (456 aa).

Helical transmembrane passes span 5 to 25 (WIVL…GSIL), 45 to 65 (WVVT…GKLG), 78 to 98 (FFIF…STLI), 105 to 125 (AVGA…AFPA), 134 to 154 (ITGA…GIIL), 158 to 178 (GWPS…FLGI), 192 to 212 (SFDI…LLAM), 220 to 240 (LYLG…EVKF), 260 to 280 (IIGV…PFYL), 289 to 309 (MMAG…APIA), 321 to 341 (ILTA…LLKA), 343 to 363 (SPLY…GAFS), 385 to 405 (FLAT…SSFF), and 428 to 448 (QSYW…VFFM).

This sequence belongs to the major facilitator superfamily.

The protein localises to the cell membrane. Functionally, transports riboflavin into the cell. This chain is Riboflavin transporter RibZ, found in Clostridioides difficile (strain 630) (Peptoclostridium difficile).